Here is a 208-residue protein sequence, read N- to C-terminus: Porimin (208 aa).

An N-terminal signal peptide occupies residues 1 to 26; sequence MGLGARGAWAALLLGTLQVLALLGAA. Residues 27-166 are Extracellular-facing; that stretch reads HESAAMAASA…EAKKGSKFDT (140 aa). Residues 42–57 are compositionally biased toward polar residues; that stretch reads GLPHNSSANSTETLQH. The interval 42 to 125 is disordered; the sequence is GLPHNSSANS…PKTTSVSQNT (84 aa). Residues Asn46, Asn50, Asn64, Asn68, Asn83, Asn96, and Asn106 are each glycosylated (N-linked (GlcNAc...) asparagine). Over residues 65 to 107 the composition is skewed to polar residues; sequence ETSNSTVKPPTSVASDSSNTTVTTMKPTAASNTTTPGMVSTNM. A compositionally biased stretch (low complexity) spans 108-122; the sequence is TSTTLKSTPKTTSVS. 2 N-linked (GlcNAc...) asparagine glycosylation sites follow: Asn124 and Asn138. Residues 167 to 187 traverse the membrane as a helical segment; the sequence is GSFVGGIVLTLGVLSILYIGC. Residues 188 to 208 are Cytoplasmic-facing; that stretch reads KMYYSRRGIRYRTIDEHDAII.

Belongs to the CD164 family. In terms of tissue distribution, ubiquitous. Not expressed in ovary. Expressed in keratinocytes.

It is found in the membrane. Functionally, implicated in oncotic cell death, characterized by cell swelling, organelle swelling, vacuolization and increased membrane permeability. The protein is Porimin (TMEM123) of Homo sapiens (Human).